The sequence spans 83 residues: Large ribosomal subunit protein bL31 (83 aa).

It belongs to the bacterial ribosomal protein bL31 family. Type A subfamily. As to quaternary structure, part of the 50S ribosomal subunit.

Its function is as follows. Binds the 23S rRNA. This Gloeothece citriformis (strain PCC 7424) (Cyanothece sp. (strain PCC 7424)) protein is Large ribosomal subunit protein bL31.